The following is a 284-amino-acid chain: Pantothenate synthetase (284 aa).

34–41 (MGALHAGH) contacts ATP. His-41 functions as the Proton donor in the catalytic mechanism. Gln-65 contributes to the (R)-pantoate binding site. Gln-65 contacts beta-alanine. 151 to 154 (GEKD) contributes to the ATP binding site. Gln-157 is a (R)-pantoate binding site. Residues Leu-180 and 188-191 (MSSR) contribute to the ATP site.

Belongs to the pantothenate synthetase family. Homodimer.

The protein resides in the cytoplasm. The enzyme catalyses (R)-pantoate + beta-alanine + ATP = (R)-pantothenate + AMP + diphosphate + H(+). It participates in cofactor biosynthesis; (R)-pantothenate biosynthesis; (R)-pantothenate from (R)-pantoate and beta-alanine: step 1/1. Catalyzes the condensation of pantoate with beta-alanine in an ATP-dependent reaction via a pantoyl-adenylate intermediate. The chain is Pantothenate synthetase from Paramagnetospirillum magneticum (strain ATCC 700264 / AMB-1) (Magnetospirillum magneticum).